Consider the following 223-residue polypeptide: MLGQGLIFISLAFVAHALEIPISCAVSHNEQTEIFPHGTIDIPEMTFRPSDSQIDWSNLSHSDFVQCGVYEDSTNTWLAGASKYKIDEIKTLPKVPRDHYIILCDSSESNEIAKFTQVVHSFDFSSDSESAVVEQLHPSSPIPILTTAVRKKGSRPSKPQKEKQGNKQGSKTEESPNVDEDELESEPEEKTFFQKYGLYLIPILFLIIMSGNNANQQAANTAK.

Positions 1-17 are cleaved as a signal peptide; it reads MLGQGLIFISLAFVAHA. An N-linked (GlcNAc...) asparagine glycan is attached at asparagine 58. Residues 149–188 form a disordered region; it reads VRKKGSRPSKPQKEKQGNKQGSKTEESPNVDEDELESEPE. Over residues 159 to 174 the composition is skewed to basic and acidic residues; that stretch reads PQKEKQGNKQGSKTEE. Acidic residues predominate over residues 176-187; that stretch reads PNVDEDELESEP. A helical transmembrane segment spans residues 191-211; sequence TFFQKYGLYLIPILFLIIMSG.

The protein resides in the endoplasmic reticulum membrane. This is an uncharacterized protein from Schizosaccharomyces pombe (strain 972 / ATCC 24843) (Fission yeast).